A 341-amino-acid polypeptide reads, in one-letter code: tRNA N6-adenosine threonylcarbamoyltransferase (341 aa).

Residues His111 and His115 each coordinate Fe cation. Substrate-binding positions include 134–138, Asp167, Gly180, and Asn274; that span reads LVSGG. Asp302 serves as a coordination point for Fe cation.

Belongs to the KAE1 / TsaD family. The cofactor is Fe(2+).

The protein localises to the cytoplasm. It catalyses the reaction L-threonylcarbamoyladenylate + adenosine(37) in tRNA = N(6)-L-threonylcarbamoyladenosine(37) in tRNA + AMP + H(+). Required for the formation of a threonylcarbamoyl group on adenosine at position 37 (t(6)A37) in tRNAs that read codons beginning with adenine. Is involved in the transfer of the threonylcarbamoyl moiety of threonylcarbamoyl-AMP (TC-AMP) to the N6 group of A37, together with TsaE and TsaB. TsaD likely plays a direct catalytic role in this reaction. The chain is tRNA N6-adenosine threonylcarbamoyltransferase from Paraburkholderia phymatum (strain DSM 17167 / CIP 108236 / LMG 21445 / STM815) (Burkholderia phymatum).